The following is a 272-amino-acid chain: Diaminopimelate epimerase (272 aa).

Residues Asn-11 and Asn-63 each coordinate substrate. Cys-72 functions as the Proton donor in the catalytic mechanism. Residues 73–74, Asn-190, and 208–209 contribute to the substrate site; these read GN and ER. Residue Cys-217 is the Proton acceptor of the active site. A substrate-binding site is contributed by 218–219; it reads GT.

The protein belongs to the diaminopimelate epimerase family. Homodimer.

Its subcellular location is the cytoplasm. It catalyses the reaction (2S,6S)-2,6-diaminopimelate = meso-2,6-diaminopimelate. The protein operates within amino-acid biosynthesis; L-lysine biosynthesis via DAP pathway; DL-2,6-diaminopimelate from LL-2,6-diaminopimelate: step 1/1. Functionally, catalyzes the stereoinversion of LL-2,6-diaminopimelate (L,L-DAP) to meso-diaminopimelate (meso-DAP), a precursor of L-lysine and an essential component of the bacterial peptidoglycan. The polypeptide is Diaminopimelate epimerase (Clostridium perfringens (strain 13 / Type A)).